A 395-amino-acid chain; its full sequence is Tryptophan synthase beta chain (395 aa).

The residue at position 86 (lysine 86) is an N6-(pyridoxal phosphate)lysine.

Belongs to the TrpB family. In terms of assembly, tetramer of two alpha and two beta chains. Pyridoxal 5'-phosphate serves as cofactor.

The enzyme catalyses (1S,2R)-1-C-(indol-3-yl)glycerol 3-phosphate + L-serine = D-glyceraldehyde 3-phosphate + L-tryptophan + H2O. It participates in amino-acid biosynthesis; L-tryptophan biosynthesis; L-tryptophan from chorismate: step 5/5. Functionally, the beta subunit is responsible for the synthesis of L-tryptophan from indole and L-serine. This Psychromonas ingrahamii (strain DSM 17664 / CCUG 51855 / 37) protein is Tryptophan synthase beta chain.